The primary structure comprises 308 residues: B3 domain-containing protein REM23 (308 aa).

The segment at residues 19–114 (FFKVLKRSDM…SFTVKIFNKD (96 aa)) is a DNA-binding region (TF-B3 1). The tract at residues 117-198 (EMMQPPQSRA…TERTQNSKRT (82 aa)) is disordered. Residues 121–133 (PPQSRASFASSSR) show a composition bias toward polar residues. Positions 134 to 145 (VKTEQDVKREEE) are enriched in basic and acidic residues. Residues 149–166 (SSDSRSRGPTTAAETNRG) show a composition bias toward polar residues. Residues 168–177 (SYKRKLNFGK) show a composition bias toward basic residues. Positions 178–198 (KKAEETQTYKRTERTQNSKRT) are enriched in basic and acidic residues. Positions 216-308 (VAGFKIFISK…LELLLVVSKP (93 aa)) form a DNA-binding region, TF-B3 2.

The protein localises to the nucleus. The sequence is that of B3 domain-containing protein REM23 (REM23) from Arabidopsis thaliana (Mouse-ear cress).